Consider the following 431-residue polypeptide: MANSC domain-containing protein 1 (431 aa).

The N-terminal stretch at 1–26 (MFFGGEGSLTYTLVIICFLTLRLSAS) is a signal peptide. Residues 27 to 385 (QNCLKKSLED…QYGLPFEKWL (359 aa)) lie on the Extracellular side of the membrane. Positions 33–117 (SLEDVVIDIQ…LKPAKGLMSY (85 aa)) constitute an MANSC domain. 3 N-linked (GlcNAc...) asparagine glycosylation sites follow: Asn72, Asn222, and Asn251. Residues 234-277 (SPHTTSATPKPATLLPTNASVTPSGTSQPQLATTAPPVTTVTSQ) are disordered. The segment covering 248-261 (LPTNASVTPSGTSQ) has biased composition (polar residues). A compositionally biased stretch (low complexity) spans 262 to 277 (PQLATTAPPVTTVTSQ). Asn327 and Asn352 each carry an N-linked (GlcNAc...) asparagine glycan. Residues 352–372 (NKTASWEGREASPGSSSQGSV) form a disordered region. A helical membrane pass occupies residues 386–408 (LIGSLLFGVLFLVIGLVLLGRIL). The Cytoplasmic segment spans residues 409-431 (SESLRRKRYSRLDYLINGIYVDI).

Widely expressed.

It localises to the membrane. The polypeptide is MANSC domain-containing protein 1 (MANSC1) (Homo sapiens (Human)).